Reading from the N-terminus, the 438-residue chain is Histidinol dehydrogenase (438 aa).

NAD(+) contacts are provided by Tyr137, Gln198, and Asn221. Substrate-binding residues include Ser244, Gln266, and His269. Residues Gln266 and His269 each coordinate Zn(2+). Residues Glu334 and His335 each act as proton acceptor in the active site. Substrate is bound by residues His335, Asp368, Glu422, and His427. Asp368 contacts Zn(2+). His427 serves as a coordination point for Zn(2+).

It belongs to the histidinol dehydrogenase family. Zn(2+) serves as cofactor.

The enzyme catalyses L-histidinol + 2 NAD(+) + H2O = L-histidine + 2 NADH + 3 H(+). It functions in the pathway amino-acid biosynthesis; L-histidine biosynthesis; L-histidine from 5-phospho-alpha-D-ribose 1-diphosphate: step 9/9. Catalyzes the sequential NAD-dependent oxidations of L-histidinol to L-histidinaldehyde and then to L-histidine. The protein is Histidinol dehydrogenase of Aromatoleum aromaticum (strain DSM 19018 / LMG 30748 / EbN1) (Azoarcus sp. (strain EbN1)).